Reading from the N-terminus, the 321-residue chain is Ras association domain-containing protein 4 (321 aa).

Residues 79–159 form a disordered region; the sequence is HLPSTSWMPR…RPKCRAPGEA (81 aa). Residues 98 to 110 show a composition bias toward polar residues; the sequence is SPQNGNITAQGPS. Ser-141 is modified (phosphoserine). One can recognise a Ras-associating domain in the interval 174-262; it reads YNHKTSVFTP…ARIFLMEADL (89 aa). The 48-residue stretch at 270–317 folds into the SARAH domain; it reads VAQYIKFEMPVLDSFVEKLKEEEEREIIKLTMKFQALRLTMLQRLEQL.

As to quaternary structure, interacts directly with activated KRAS in a GTP-dependent manner. Widely expressed. Frequently down-regulated in tumor cell lines.

Potential tumor suppressor. May act as a KRAS effector protein. May promote apoptosis and cell cycle arrest. This Homo sapiens (Human) protein is Ras association domain-containing protein 4 (RASSF4).